Here is a 351-residue protein sequence, read N- to C-terminus: Delta(7)-sterol 5(6)-desaturase (351 aa).

Transmembrane regions (helical) follow at residues 88–108 (LSLF…VASF), 136–156 (GLGA…LELH), and 173–193 (VRLA…IYLL). Residues 180–305 (LFFILFTDFG…FTTLWDRLGG (126 aa)) form the Fatty acid hydroxylase domain. A Histidine box-1 motif is present at residues 194 to 198 (HRWLH). The Histidine box-2 signature appears at 207–211 (HKKHH). The helical transmembrane segment at 237 to 257 (HLFPMLFPLHKVSYLVLFTFV) threads the bilayer. The Histidine box-3 motif lies at 282-286 (HTVHH).

The protein belongs to the sterol desaturase family. Fe cation serves as cofactor.

The protein localises to the endoplasmic reticulum membrane. It catalyses the reaction a Delta(7)-sterol + 2 Fe(II)-[cytochrome b5] + O2 + 2 H(+) = a Delta(5),Delta(7)-sterol + 2 Fe(III)-[cytochrome b5] + 2 H2O. The protein operates within steroid metabolism; ergosterol biosynthesis; ergosterol from zymosterol: step 3/5. In terms of biological role, catalyzes the introduction of a C-5 double bond in the B ring of ergosterol. May contribute to the regulation of ergosterol biosynthesis. The chain is Delta(7)-sterol 5(6)-desaturase (ERG3) from Eremothecium gossypii (strain ATCC 10895 / CBS 109.51 / FGSC 9923 / NRRL Y-1056) (Yeast).